The following is a 124-amino-acid chain: Holo-[acyl-carrier-protein] synthase (124 aa).

The Mg(2+) site is built by D5 and E56.

This sequence belongs to the P-Pant transferase superfamily. AcpS family. Mg(2+) is required as a cofactor.

The protein localises to the cytoplasm. The enzyme catalyses apo-[ACP] + CoA = holo-[ACP] + adenosine 3',5'-bisphosphate + H(+). Functionally, transfers the 4'-phosphopantetheine moiety from coenzyme A to a Ser of acyl-carrier-protein. This Campylobacter hominis (strain ATCC BAA-381 / DSM 21671 / CCUG 45161 / LMG 19568 / NCTC 13146 / CH001A) protein is Holo-[acyl-carrier-protein] synthase.